A 686-amino-acid polypeptide reads, in one-letter code: Homoaconitase, mitochondrial (686 aa).

The transit peptide at 1–17 directs the protein to the mitochondrion; the sequence is MRVVRCVRRFSASRAVS. C337, C401, and C404 together coordinate [4Fe-4S] cluster.

Belongs to the aconitase/IPM isomerase family. [4Fe-4S] cluster is required as a cofactor.

It localises to the mitochondrion. The catalysed reaction is (2R,3S)-homoisocitrate = cis-homoaconitate + H2O. It functions in the pathway amino-acid biosynthesis; L-lysine biosynthesis via AAA pathway; L-alpha-aminoadipate from 2-oxoglutarate: step 3/5. Catalyzes the reversible hydration of cis-homoaconitate to (2R,3S)-homoisocitrate, a step in the alpha-aminoadipate pathway for lysine biosynthesis. This Eremothecium gossypii (strain ATCC 10895 / CBS 109.51 / FGSC 9923 / NRRL Y-1056) (Yeast) protein is Homoaconitase, mitochondrial (LYS4).